Reading from the N-terminus, the 495-residue chain is Solute carrier family 2, facilitated glucose transporter member 3 (495 aa).

Residues 1–10 lie on the Cytoplasmic side of the membrane; it reads MGTQKVTVSL. The helical transmembrane segment at 11–32 threads the bilayer; sequence IFALSIATIGSFQFGYNTGVIN. Residues 33–64 are Extracellular-facing; it reads APETIIKDFLNYTLEEKSENLPTEVLLTSLWS. N-linked (GlcNAc...) asparagine glycosylation occurs at asparagine 43. A helical transmembrane segment spans residues 65-85; sequence LSVAIFSVGGMIGSFSVGLFV. Residues 86-90 lie on the Cytoplasmic side of the membrane; sequence NRFGR. Residues 91–111 traverse the membrane as a helical segment; that stretch reads RNSMLMVNLLAVAGGCLMGFC. The Extracellular portion of the chain corresponds to 112 to 118; it reads KIAQSVE. Residues 119–142 traverse the membrane as a helical segment; sequence MLILGRLIIGLFCGLCTGFVPMYI. At 143–153 the chain is on the cytoplasmic side; that stretch reads GEISPTALRGA. The chain crosses the membrane as a helical span at residues 154–174; sequence FGTLNQLGIVIGILVAQIFGL. Glutamine 159 contributes to the D-glucose binding site. The Extracellular segment spans residues 175-183; the sequence is KVIMGTEEL. A helical transmembrane segment spans residues 184 to 204; that stretch reads WPLLLGFTIIPAVLQSAALPF. Residues 205–269 lie on the Cytoplasmic side of the membrane; that stretch reads CPESPRFLLI…LFRSRSYRQP (65 aa). Threonine 232 carries the phosphothreonine modification. Residues 270 to 290 form a helical membrane-spanning segment; it reads IIISIMLQLSQQLSGINAVFY. Residues 277-279 form an important for selectivity against fructose region; it reads QLS. D-glucose contacts are provided by residues 280-281 and asparagine 286; that span reads QQ. The Extracellular segment spans residues 291 to 304; the sequence is YSTGIFKDAGVEEP. A helical transmembrane segment spans residues 305-325; sequence IYATIGAGVVNTIFTVVSLFL. Asparagine 315 contacts D-glucose. Topologically, residues 326 to 331 are cytoplasmic; sequence VERAGR. The chain crosses the membrane as a helical span at residues 332–352; the sequence is RTLHMIGLGGMAVCSILMTIS. Residues 353-363 are Extracellular-facing; it reads LLLKDNYNWMS. A helical membrane pass occupies residues 364 to 389; that stretch reads FVCIGAILVFVAFFEIGPGPIPWFIV. Glutamate 378 and tryptophan 386 together coordinate D-glucose. Residues 390–399 lie on the Cytoplasmic side of the membrane; that stretch reads AELFSQGPRP. The helical transmembrane segment at 400-420 threads the bilayer; sequence AAMAVAGCSNWTSNFLVGLLF. Residues 421–429 are Extracellular-facing; that stretch reads PSAAFYLGA. The chain crosses the membrane as a helical span at residues 430–450; the sequence is YVFIIFTGFLIVFLVFTFFKV. Residues 451–495 lie on the Cytoplasmic side of the membrane; sequence PETRGRTFEEITRAFEGQGQDANRAEKGPIVEMNSMQPVKETATV. Serine 485 bears the Phosphoserine mark. Threonine 492 carries the phosphothreonine modification.

Belongs to the major facilitator superfamily. Sugar transporter (TC 2.A.1.1) family. Glucose transporter subfamily. Interacts with SMIM43; the interaction may promote SLC2A3-mediated glucose transport to meet the energy needs of mesendoderm differentiation.

It localises to the cell membrane. The protein resides in the perikaryon. The protein localises to the cell projection. It catalyses the reaction D-glucose(out) = D-glucose(in). It carries out the reaction D-galactose(in) = D-galactose(out). Its activity is regulated as follows. Deoxyglucose transport is inhibited by D-glucose, D-galactose and maltose. Galactose transport is inhibited by D-glucose and maltose. Functionally, facilitative glucose transporter. Can also mediate the uptake of various other monosaccharides across the cell membrane. Mediates the uptake of glucose, 2-deoxyglucose, galactose, mannose, xylose and fucose, and probably also dehydroascorbate. Does not mediate fructose transport. Required for mesendoderm differentiation. The sequence is that of Solute carrier family 2, facilitated glucose transporter member 3 from Canis lupus familiaris (Dog).